The following is an 839-amino-acid chain: ATP-binding cassette sub-family F member 1 (839 aa).

Residues 1 to 258 (MPKGPKQQPP…KKEKKKLKKQ (258 aa)) are disordered. S22 is modified (phosphoserine). Basic residues predominate over residues 29–39 (KKGKKDKKTKK). A compositionally biased stretch (basic and acidic residues) spans 47–64 (VEDKQAGEEEKLQKEKEQ). The segment covering 71 to 83 (QKKKRDTRKGRRK) has biased composition (basic residues). Phosphoserine occurs at positions 105, 109, and 140. Residues 136-149 (IQDESEEEKEEEEE) show a composition bias toward acidic residues. The segment covering 150–162 (KPVLKPAKPEKNR) has biased composition (basic and acidic residues). Position 195 is a phosphothreonine (T195). The residue at position 197 (S197) is a Phosphoserine. Over residues 206-223 (TKEKEPPRPGKDKDKKGA) the composition is skewed to basic and acidic residues. Position 227 is a phosphoserine (S227). Residues 247-256 (LSKKEKKKLK) show a composition bias toward basic residues. One can recognise an ABC transporter 1 domain in the interval 298–542 (IKLEKFSISA…MYQQKQKELL (245 aa)). 330-337 (GPNGKGKT) serves as a coordination point for ATP. Over residues 553-574 (KELKAGGKSTKQAEKQTKEVLT) the composition is skewed to basic and acidic residues. The segment at 553 to 600 (KELKAGGKSTKQAEKQTKEVLTRKQQKCRRKNQDEESQDPPELLKRPR) is disordered. S589 bears the Phosphoserine mark. The region spanning 619–834 (LGLHGVTFGY…VLEALGEVMV (216 aa)) is the ABC transporter 2 domain. 652–659 (GPNGVGKS) serves as a coordination point for ATP.

As to quaternary structure, interacts (via N-terminus) with EIF2S1; the interaction is independent of its phosphorylated status. Associates (via both ABC transporter domains) with the ribosomes. Post-translationally, phosphorylated at phosphoserine and phosphothreonine. Phosphorylation on Ser-109 and Ser-140 by CK2; inhibits association of EIF2 with ribosomes.

Its subcellular location is the cytoplasm. The protein localises to the nucleus. It localises to the nucleoplasm. It is found in the nucleus envelope. Required for efficient Cap- and IRES-mediated mRNA translation initiation. Not involved in the ribosome biogenesis. In Rattus norvegicus (Rat), this protein is ATP-binding cassette sub-family F member 1 (Abcf1).